We begin with the raw amino-acid sequence, 469 residues long: Glutamate--tRNA ligase (469 aa).

A 'HIGH' region motif is present at residues 10–20; sequence PSPTGYLHVGG. Residues cysteine 99, cysteine 101, cysteine 126, and aspartate 128 each coordinate Zn(2+). A 'KMSKS' region motif is present at residues 238–242; that stretch reads RLSKR. Residue lysine 241 coordinates ATP.

The protein belongs to the class-I aminoacyl-tRNA synthetase family. Glutamate--tRNA ligase type 1 subfamily. Monomer. It depends on Zn(2+) as a cofactor.

The protein resides in the cytoplasm. It carries out the reaction tRNA(Glu) + L-glutamate + ATP = L-glutamyl-tRNA(Glu) + AMP + diphosphate. Its function is as follows. Catalyzes the attachment of glutamate to tRNA(Glu) in a two-step reaction: glutamate is first activated by ATP to form Glu-AMP and then transferred to the acceptor end of tRNA(Glu). This Pelobacter propionicus (strain DSM 2379 / NBRC 103807 / OttBd1) protein is Glutamate--tRNA ligase.